The primary structure comprises 714 residues: Methyl-accepting chemotaxis protein TlpQ (714 aa).

The chain crosses the membrane as a helical span at residues 12–32; that stretch reads ITLLAGLCLLGVVALLVGLSV. The region spanning 50-290 is the Cache domain; that stretch reads LDESARLRLE…LLGKNLAKAD (241 aa). Histamine contacts are provided by residues glutamate 170, 208-210, and aspartate 239; that span reads YFD. The helical transmembrane segment at 360–380 threads the bilayer; the sequence is TWVELGLGLGAAVLGLLVLWL. The HAMP domain maps to 383–437; that stretch reads RGVTRPILGVAHMLRDIASGEGDLTQRLPHTGRDELGELAGWFNRFLDKLQPIIR. The 237-residue stretch at 442–678 folds into the Methyl-accepting transducer domain; that stretch reads SVRDARSTAD…EINRNVAAIR (237 aa).

This sequence belongs to the methyl-accepting chemotaxis (MCP) protein family. Homotetramer.

The protein resides in the cell membrane. Chemotactic-signal transducers respond to changes in the concentration of attractants and repellents in the environment, transduce a signal from the outside to the inside of the cell, and facilitate sensory adaptation through the variation of the level of methylation. TlpQ is a chemoreceptor that binds and mediates chemotaxis to histamine, a key biological signaling molecule. It binds histamine with high affinity, which permits responses to very low histamine concentrations. Chemotaxis to histamine may play a role in the virulence of P.aeruginosa by recruiting cells at the infection site and consequently modulating the expression of quorum-sensing-dependent virulence genes. TlpQ also binds and mediates chemotaxis to polyamines such as putrescine, spermidine, cadaverine, agmatine and ethylenediamine. In addition, binds the quorum-sensing signal autoinducer 2 (AI-2), thus inducing chemotaxis toward AI-2 and biofilm formation. The protein is Methyl-accepting chemotaxis protein TlpQ of Pseudomonas aeruginosa (strain ATCC 15692 / DSM 22644 / CIP 104116 / JCM 14847 / LMG 12228 / 1C / PRS 101 / PAO1).